The chain runs to 446 residues: D(1A) dopamine receptor (446 aa).

The Extracellular portion of the chain corresponds to 1-23 (MRTLNTSTMDGTGLVVERDFSFR). A glycan (N-linked (GlcNAc...) asparagine) is linked at Asn-5. Residues 24-49 (ILTACFLSLLILSTLLGNTLVCAAVI) traverse the membrane as a helical segment. Residues 50–60 (RFRHLRSKVTN) are Cytoplasmic-facing. Residues 61–87 (FFVISLAVSDLLVAVLVMPWKAVAEIA) form a helical membrane-spanning segment. The Extracellular segment spans residues 88-96 (GFWPFGSFC). Cys-96 and Cys-186 are joined by a disulfide. The helical transmembrane segment at 97-119 (NIWVAFDIMCSTASILNLCVISV) threads the bilayer. Over 120 to 138 (DRYWAISSPFRYERKMTPK) the chain is Cytoplasmic. The chain crosses the membrane as a helical span at residues 139–163 (AAFILISVAWTLSVLISFIPVQLSW). Residues 164-192 (HKAKPTSPSDGNVTSLGKTTHNCDSSLSR) are Extracellular-facing. A helical membrane pass occupies residues 193 to 218 (TYAISSSLISFYIPVAIMIVTYTRIY). The Cytoplasmic portion of the chain corresponds to 219–272 (RIAQKQIRRISALERAAVHAKNCQTTAGNGNPAECSQPESSFKMSFKRETKVLK). The chain crosses the membrane as a helical span at residues 273 to 299 (TLSVIMGVFVCCWLPFFILNCMVPFCG). Over 300–312 (SGETKPFCIDSIT) the chain is Extracellular. The helical transmembrane segment at 313–337 (FDVFVWFGWANSSLNPIIYAFNADF) threads the bilayer. The Cytoplasmic segment spans residues 338 to 446 (RKAFSTLLGC…PITQNGQHPT (109 aa)). 2 S-palmitoyl cysteine lipidation sites follow: Cys-347 and Cys-351.

The protein belongs to the G-protein coupled receptor 1 family. As to quaternary structure, interacts with DNAJC14 via its C-terminus. Interacts with DRD2. Interacts with DORIP1.

The protein resides in the cell membrane. The protein localises to the endoplasmic reticulum membrane. Its subcellular location is the cell projection. It localises to the cilium membrane. It is found in the dendrite. The protein resides in the dendritic spine. In terms of biological role, dopamine receptor whose activity is mediated by G proteins which activate adenylyl cyclase. The sequence is that of D(1A) dopamine receptor (DRD1) from Sus scrofa (Pig).